A 6629-amino-acid polypeptide reads, in one-letter code: Replicase polyprotein 1ab (6629 aa).

Residues Met-1 to Lys-1750 are Cytoplasmic-facing. The Ubiquitin-like 1 domain occupies Lys-675 to Glu-780. Positions Asp-783–Glu-802 are disordered. The Macro domain maps to Val-1003–Thr-1179. In terms of domain architecture, Ubiquitin-like 2 spans Cys-1175 to Val-1227. The Peptidase C16 domain maps to Glu-1236–Asn-1497. Cys-1274 acts as the For PL-PRO activity in catalysis. Residues Cys-1353, Cys-1355, Cys-1387, and Cys-1390 each contribute to the Zn(2+) site. The C4-type; degenerate zinc-finger motif lies at Cys-1353 to Cys-1390. Residues His-1437 and Asp-1448 each act as for PL-PRO activity in the active site. Residues Val-1751 to Thr-1771 form a helical membrane-spanning segment. The interval Val-1751–Cys-1864 is HD1. Positions Met-1769 to Asp-1833 constitute a 3Ecto domain. Over Gly-1772–Asn-1843 the chain is Lumenal. 2 disulfides stabilise this stretch: Cys-1785–Cys-1811 and Cys-1802–Cys-1808. Residues Trp-1844 to Cys-1864 form a helical membrane-spanning segment. At Tyr-1865–Lys-2280 the chain is on the cytoplasmic side. The segment at Tyr-1911–Ala-2001 is Y1. Residues Tyr-1911 to Lys-2263 enclose the CoV Nsp3 Y domain. His-1915, Cys-1920, Cys-1925, Cys-1928, Cys-1961, His-1964, Cys-1968, and Cys-1971 together coordinate Zn(2+). The interval His-1915 to Cys-1928 is ZF1. The segment at Cys-1961 to Cys-1971 is ZF2. The interval Tyr-2002–Leu-2104 is Y2. The segment at Tyr-2002–Lys-2263 is coV-Y. The tract at residues Val-2105–Asp-2163 is Y3. The tract at residues Val-2164–Lys-2263 is Y4. The helical transmembrane segment at Trp-2281–Val-2301 threads the bilayer. The HD2 stretch occupies residues Trp-2281 to Ile-2664. The Lumenal portion of the chain corresponds to Ser-2302 to Tyr-2559. The chain crosses the membrane as a helical span at residues Met-2560–Ile-2580. At Lys-2581–Ser-2611 the chain is on the cytoplasmic side. Residues Tyr-2612–Ser-2632 form a helical membrane-spanning segment. The Lumenal segment spans residues Arg-2633 to Leu-2643. A helical membrane pass occupies residues Val-2644–Ile-2664. The Cytoplasmic segment spans residues Tyr-2665 to Trp-3096. A Nsp4C domain is found at Leu-2684–Gln-2779. The region spanning Ser-2780 to Gln-3086 is the Peptidase C30 domain. Active-site for 3CL-PRO activity residues include His-2820 and Cys-2922. Residues Phe-3097–Thr-3117 traverse the membrane as a helical segment. The tract at residues Phe-3097 to Tyr-3317 is HD3. The Lumenal segment spans residues Ala-3118 to Leu-3121. The chain crosses the membrane as a helical span at residues Lys-3122–Val-3142. Residues Lys-3143 to Thr-3151 lie on the Cytoplasmic side of the membrane. Residues Phe-3152–Tyr-3172 traverse the membrane as a helical segment. Topologically, residues Asn-3173–Asp-3188 are lumenal. The chain crosses the membrane as a helical span at residues Pro-3189–Phe-3209. Residues Lys-3210–Glu-3257 lie on the Cytoplasmic side of the membrane. A helical membrane pass occupies residues Leu-3258–Phe-3278. The Lumenal portion of the chain corresponds to Lys-3279–Tyr-3296. Residues Val-3297–Tyr-3317 form a helical membrane-spanning segment. Residues Trp-3318–Met-6629 are Cytoplasmic-facing. The RdRp Nsp7 cofactor domain occupies Ala-3380 to Gln-3462. Residues Ser-3463–Gln-3672 enclose the RdRp Nsp8 cofactor domain. The 111-residue stretch at Asn-3673–Gln-3783 folds into the Nsp9 ssRNA-binding domain. The 142-residue stretch at Lys-3785 to Ser-3926 folds into the ExoN/MTase coactivator domain. Residues Cys-3858, Cys-3861, His-3867, Cys-3878, Cys-3904, Cys-3907, Cys-3915, and Cys-3917 each contribute to the Zn(2+) site. Zinc fingers lie at residues Cys-3858–Cys-3878 and Cys-3904–Cys-3917. In terms of domain architecture, NiRAN spans Tyr-3940–Val-4198. Positions Lys-4203 to Ser-4301 constitute a Nsp12 Interface domain. Residues His-4232, Cys-4238, Cys-4243, Cys-4247, and Cys-4424 each contribute to the Zn(2+) site. A Nsp12 RNA-dependent RNA polymerase domain is found at Lys-4302–Gln-4868. The rdRp Fingers N-ter stretch occupies residues Gly-4304–Asn-4517. Positions Thr-4518 to Pro-4556 are rdRp Palm N-ter. The region spanning Pro-4548–Gly-4710 is the RdRp catalytic domain. The segment at Lys-4557 to Gly-4615 is rdRp Fingers C-ter. Zn(2+) is bound by residues His-4578, Cys-4581, and Cys-4582. Residues Thr-4616–Gln-4751 form a rdRp Palm C-ter region. Catalysis depends on residues Ser-4695, Asp-4696, and Asp-4697. The segment at His-4752–Gln-4868 is rdRp Thumb. Positions Ser-4869 to Asn-4981 constitute a CV ZBD domain. Cys-4873, Cys-4876, Cys-4884, Cys-4887, Cys-4894, Cys-4897, His-4901, His-4907, Cys-4918, Cys-4923, Cys-4940, and His-4943 together coordinate Zn(2+). Positions Met-5125–Leu-5305 constitute a (+)RNA virus helicase ATP-binding domain. Gly-5150–Ser-5157 contributes to the ATP binding site. Residues Ala-5306–Asn-5477 form the (+)RNA virus helicase C-terminal domain. The ExoN domain occupies Met-5539–Cys-5753. Catalysis depends on residues Asp-5557, Glu-5559, and Glu-5658. Positions 5674, 5676, 5692, 5695, 5723, 5727, and 5730 each coordinate Zn(2+). Residues His-5734 and Asp-5739 contribute to the active site. Cys-5745 provides a ligand contact to Zn(2+). An N7-MTase domain is found at Tyr-5762–Gln-5989. Asp-5797 to Gly-5803 is an S-adenosyl-L-methionine binding site. Residues Cys-5877–Thr-5891 form a gpppA-binding region. 4 residues coordinate Zn(2+): Cys-5915, Cys-5935, Cys-5946, and His-5949. Residues Ser-5990–Arg-6050 enclose the Nsp15 N-terminal oligomerization domain. The AV-Nsp11N/CoV-Nsp15M domain maps to Asn-6051 to Val-6166. The region spanning Glu-6183–Pro-6324 is the NendoU domain. Catalysis depends on residues His-6212, His-6227, Lys-6267, Lys-6371, Asp-6455, Lys-6499, and Glu-6532. The region spanning Gln-6327–Val-6626 is the Nidovirus-type SAM-dependent 2'-O-MTase domain.

It belongs to the coronaviruses polyprotein 1ab family. Interacts with host PHB and PHB2. As to quaternary structure, interacts with papain-like protease and non-structural protein 6. In terms of assembly, monomer. Homodimer. Only the homodimer shows catalytic activity. Eight copies of nsp7 and eight copies of nsp8 assemble to form a heterohexadecamer dsRNA-encircling ring structure. As to quaternary structure, eight copies of nsp7 and eight copies of nsp8 assemble to form a heterohexadecamer dsRNA-encircling ring structure. Interacts with ORF6 protein. In terms of assembly, homodimer. Homododecamer. Interacts with proofreading exoribonuclease nsp14 and 2'-O-methyltransferase nsp16; these interactions enhance nsp14 and nsp16 enzymatic activities. As to quaternary structure, interacts with host DDX1 (via C-terminus). Interacts with non-structural protein 10. In terms of assembly, homohexamer. Interacts with non-structural protein 10. Mn(2+) is required as a cofactor. It depends on Zn(2+) as a cofactor. Specific enzymatic cleavages in vivo by its own proteases yield mature proteins. 3C-like proteinase nsp5 liberates nsps 6-16 from the polyprotein. Papain-like and 3C-like proteinases are autocatalytically processed. Post-translationally, N-glycosylated.

It is found in the host endoplasmic reticulum membrane. Its subcellular location is the host cytoplasm. The protein localises to the host perinuclear region. The protein resides in the host endoplasmic reticulum. It localises to the host endoplasmic reticulum-Golgi intermediate compartment. The catalysed reaction is Thiol-dependent hydrolysis of ester, thioester, amide, peptide and isopeptide bonds formed by the C-terminal Gly of ubiquitin (a 76-residue protein attached to proteins as an intracellular targeting signal).. It catalyses the reaction RNA(n) + a ribonucleoside 5'-triphosphate = RNA(n+1) + diphosphate. It carries out the reaction ATP + H2O = ADP + phosphate + H(+). The enzyme catalyses uridylyl-uridylyl-ribonucleotide-RNA = a 3'-end uridylyl-2',3'-cyclophospho-uridine-RNA + a 5'-end dephospho-ribonucleoside-RNA. The catalysed reaction is a 5'-end diphospho-ribonucleoside in mRNA + GTP + H(+) = a 5'-end (5'-triphosphoguanosine)-ribonucleoside in mRNA + diphosphate. It catalyses the reaction a 5'-end (N(7)-methyl 5'-triphosphoguanosine)-ribonucleoside in mRNA + S-adenosyl-L-methionine = a 5'-end (N(7)-methyl 5'-triphosphoguanosine)-(2'-O-methyl-ribonucleoside) in mRNA + S-adenosyl-L-homocysteine + H(+). Multifunctional protein involved in the transcription and replication of viral RNAs. Contains the proteinases responsible for the cleavages of the polyprotein. Its function is as follows. May play a role in the modulation of host cell survival signaling pathway by interacting with host PHB and PHB2. Indeed, these two proteins play a role in maintaining the functional integrity of the mitochondria and protecting cells from various stresses. In terms of biological role, responsible for the cleavages located at the N-terminus of the replicase polyprotein. In addition, PL-PRO possesses a deubiquitinating/deISGylating activity and processes both 'Lys-48'- and 'Lys-63'-linked polyubiquitin chains from cellular substrates. Functionally, plays a role in host membrane rearrangement that leads to creation of cytoplasmic double-membrane vesicles (DMV) necessary for viral replication. Alone is able to induce paired membranes. Coexpression of nsp3 and nsp4 does not result in the formation of DMVs. Responsible for the majority of cleavages as it cleaves the C-terminus of replicase polyprotein at 11 sites. Recognizes substrates containing the core sequence [ILMVF]-Q-|-[SGACN]. Inhibited by the substrate-analog Cbz-Val-Asn-Ser-Thr-Leu-Gln-CMK. Its function is as follows. Forms a hexadecamer with nsp8 (8 subunits of each) that may participate in viral replication by acting as a primase. Alternatively, may synthesize substantially longer products than oligonucleotide primers. In terms of biological role, forms a hexadecamer with nsp7 (8 subunits of each) that may participate in viral replication by acting as a primase. Alternatively, may synthesize substantially longer products than oligonucleotide primers. Functionally, forms a primer, NSP9-pU, which is utilized by the polymerase for the initiation of RNA chains. Interacts with ribosome signal recognition particle RNA (SRP). Together with NSP8, suppress protein integration into the cell membrane, thereby disrupting host immune defenses. Plays a pivotal role in viral transcription by stimulating both nsp14 3'-5' exoribonuclease and nsp16 2'-O-methyltransferase activities. Therefore plays an essential role in viral mRNAs cap methylation. Its function is as follows. RNA-directed RNA polymerase that catalyzes the transcription of viral genomic and subgenomic RNAs. Acts in complex with nsp7 and nsp8 to transcribe both the minus and positive strands of genomic RNA. The kinase-like NiRAN domain of NSP12 attaches one or more nucleotides to the amino terminus of NSP9, forming a covalent RNA-protein intermediate that serves as transcription/replication primer. Subgenomic RNAs (sgRNAs) are formed by discontinuous transcription: The polymerase has the ability to pause at transcription-regulating sequences (TRS) and jump to the leader TRS, resulting in a major deletion. This creates a series of subgenomic RNAs that are replicated, transcribed and translated. In addition, Nsp12 is a subunit of the viral RNA capping enzyme that catalyzes the RNA guanylyltransferase reaction for genomic and sub-genomic RNAs. Subsequently, the NiRAN domain transfers RNA to GDP, and forms the core cap structure GpppA-RNA. In terms of biological role, multi-functional protein with a zinc-binding domain in N-terminus displaying RNA and DNA duplex-unwinding activities with 5' to 3' polarity. Activity of helicase is dependent on magnesium. Functionally, enzyme possessing two different activities: an exoribonuclease activity acting on both ssRNA and dsRNA in a 3' to 5' direction and a N7-guanine methyltransferase activity. Acts as a proofreading exoribonuclease for RNA replication, thereby lowering The sensitivity of the virus to RNA mutagens. Plays a role in viral transcription/replication and prevents the simultaneous activation of host cell dsRNA sensors, such as MDA5/IFIH1, OAS, and PKR. Acts by degrading the 5'-polyuridines generated during replication of the poly(A) region of viral genomic and subgenomic RNAs. Catalyzes a two-step reaction in which a 2'3'-cyclic phosphate (2'3'-cP) is first generated by 2'-O transesterification, which is then hydrolyzed to a 3'-phosphate (3'-P). If not degraded, poly(U) RNA would hybridize with poly(A) RNA tails and activate host dsRNA sensors. Its function is as follows. Methyltransferase that mediates mRNA cap 2'-O-ribose methylation to the 5'-cap structure of viral mRNAs. N7-methyl guanosine cap is a prerequisite for binding of nsp16. Therefore plays an essential role in viral mRNAs cap methylation which is essential to evade immune system. The chain is Replicase polyprotein 1ab (rep) from Gallus gallus (Chicken).